Here is a 235-residue protein sequence, read N- to C-terminus: MNKNVMIKGLTALTILTSLGFAENISDQPHSIAKAEKNIKEVTDATKAPYNSVVAFAGGTGVVVGKNTIVTNKHIAKSNDIFKNRVSAHHSSKGKGGGNYDVKDIVEYPGKEDLAIVHVHETSTEGLNFNKNVSYTKFAEGAKMKDRISVIGYPKGAQTKYKMFESTGTINHINGTFMEFDAYAQPGNSGSPVLNSKNELVGILYAGSGKDESEKNFGVYFTPQLKEFIQNNIEK.

The N-terminal stretch at 1-35 (MNKNVMIKGLTALTILTSLGFAENISDQPHSIAKA) is a signal peptide. Catalysis depends on charge relay system residues histidine 74, aspartate 113, and serine 189.

This sequence belongs to the peptidase S1B family.

It is found in the secreted. This Staphylococcus aureus protein is Serine protease SplA (splA).